The chain runs to 97 residues: Citrate lyase acyl carrier protein (97 aa).

An O-(phosphoribosyl dephospho-coenzyme A)serine modification is found at Ser14.

It belongs to the CitD family. In terms of assembly, oligomer with a subunit composition of (alpha,beta,gamma)6.

It localises to the cytoplasm. Covalent carrier of the coenzyme of citrate lyase. This chain is Citrate lyase acyl carrier protein, found in Rhodopseudomonas palustris (strain BisA53).